A 171-amino-acid polypeptide reads, in one-letter code: Dual specificity protein phosphatase OPG106 (171 aa).

The tract at residues 1–27 (MDKKSLYKYLLLRSTGDMHKAKSPTIM) is dimerization. A Tyrosine-protein phosphatase domain is found at 23–171 (SPTIMTRVTN…IIEKYVIDKN (149 aa)). C110 serves as the catalytic Phosphocysteine intermediate.

Belongs to the protein-tyrosine phosphatase family. Non-receptor class dual specificity subfamily. As to quaternary structure, homodimer.

The protein resides in the virion. It localises to the host cytoplasm. It catalyses the reaction O-phospho-L-tyrosyl-[protein] + H2O = L-tyrosyl-[protein] + phosphate. The catalysed reaction is O-phospho-L-seryl-[protein] + H2O = L-seryl-[protein] + phosphate. Functionally, serine/tyrosine phosphatase which down-regulates cellular antiviral response by dephosphorylating activated host STAT1 and blocking interferon (IFN)-stimulated innate immune responses. Dephosphorylates the OPG144 protein. This is Dual specificity protein phosphatase OPG106 (OPG106) from Bos taurus (Bovine).